A 173-amino-acid polypeptide reads, in one-letter code: Peptide deformylase (173 aa).

The Fe cation site is built by cysteine 91 and histidine 133. Glutamate 134 is a catalytic residue. Position 137 (histidine 137) interacts with Fe cation.

It belongs to the polypeptide deformylase family. Fe(2+) serves as cofactor.

It catalyses the reaction N-terminal N-formyl-L-methionyl-[peptide] + H2O = N-terminal L-methionyl-[peptide] + formate. Functionally, removes the formyl group from the N-terminal Met of newly synthesized proteins. Requires at least a dipeptide for an efficient rate of reaction. N-terminal L-methionine is a prerequisite for activity but the enzyme has broad specificity at other positions. This is Peptide deformylase from Blochmanniella pennsylvanica (strain BPEN).